Reading from the N-terminus, the 351-residue chain is Fe(3+) ions import ATP-binding protein FbpC (351 aa).

The region spanning 7 to 237 (VVLKNVCKRF…PSSMFMANFM (231 aa)) is the ABC transporter domain. 39-46 (GPSGCGKT) serves as a coordination point for ATP.

The protein belongs to the ABC transporter superfamily. Fe(3+) ion importer (TC 3.A.1.10) family. As to quaternary structure, the complex is composed of two ATP-binding proteins (FbpC), two transmembrane proteins (FbpB) and a solute-binding protein (FbpA).

It is found in the cell inner membrane. It carries out the reaction Fe(3+)(out) + ATP + H2O = Fe(3+)(in) + ADP + phosphate + H(+). In terms of biological role, part of the ABC transporter complex FbpABC involved in Fe(3+) ions import. Responsible for energy coupling to the transport system. The chain is Fe(3+) ions import ATP-binding protein FbpC from Photobacterium profundum (strain SS9).